We begin with the raw amino-acid sequence, 121 residues long: uncharacterized protein (121 aa).

A run of 2 helical transmembrane segments spans residues 16–36 and 74–94; these read GFMV…GFAV and LYIA…MKTI.

Its subcellular location is the cell membrane. This is an uncharacterized protein from Bacillus subtilis (strain 168).